A 261-amino-acid polypeptide reads, in one-letter code: Putative quercetin 2,3-dioxygenase Ta0133 (261 aa).

A divalent metal cation-binding residues include His17, His19, His61, and Glu63.

Belongs to the pirin family. A divalent metal cation is required as a cofactor.

The enzyme catalyses quercetin + O2 = 2-(3,4-dihydroxybenzoyloxy)-4,6-dihydroxybenzoate + CO. The protein operates within flavonoid metabolism; quercetin degradation. In terms of biological role, putative quercetin 2,3-dioxygenase. The polypeptide is Putative quercetin 2,3-dioxygenase Ta0133 (Thermoplasma acidophilum (strain ATCC 25905 / DSM 1728 / JCM 9062 / NBRC 15155 / AMRC-C165)).